The chain runs to 465 residues: GTPase Der (465 aa).

2 consecutive EngA-type G domains span residues Phe-3–Tyr-166 and Ile-184–Asn-358. Residues Gly-9–Ser-16, Asp-56–Ile-60, Asn-118–Asp-121, Gly-190–Ser-197, Asp-237–Val-241, and Asn-302–Asp-305 contribute to the GTP site. A KH-like domain is found at Lys-359–Glu-443. Positions Phe-446–Lys-465 are disordered.

This sequence belongs to the TRAFAC class TrmE-Era-EngA-EngB-Septin-like GTPase superfamily. EngA (Der) GTPase family. As to quaternary structure, associates with the 50S ribosomal subunit.

GTPase that plays an essential role in the late steps of ribosome biogenesis. The polypeptide is GTPase Der (Francisella tularensis subsp. tularensis (strain WY96-3418)).